The sequence spans 523 residues: Mitochondrial distribution and morphology protein 12 (523 aa).

One can recognise an SMP-LTD domain in the interval 1-483 (MSFDINWEKL…WPSWICVDMA (483 aa)). Residues 108 to 117 (HEADIINDHD) are compositionally biased toward basic and acidic residues. Disordered regions lie at residues 108 to 160 (HEAD…QYDE), 178 to 213 (SAST…PFQS), 270 to 313 (KTKE…NAKN), and 483 to 523 (AEND…KKED). Acidic residues-rich tracts occupy residues 118–140 (YGDE…DDEN) and 148–158 (EDEENEESSQY). Composition is skewed to polar residues over residues 178–187 (SASTPKRTSP) and 277–288 (SGDQQQGKQTGK). Residues 289–313 (ANEKGQKHKHEHEEEQGSDKQNAKN) show a composition bias toward basic and acidic residues. Positions 483–501 (AENDDEEEDDDDDDHDEDN) are enriched in acidic residues. Residues 502–523 (EGRGRMRDTGDVDVRDHDKKED) show a composition bias toward basic and acidic residues.

Belongs to the MDM12 family. In terms of assembly, component of the ER-mitochondria encounter structure (ERMES) or MDM complex, composed of MMM1, MDM10, MDM12 and MDM34. An MMM1 homodimer associates with one molecule of MDM12 on each side in a pairwise head-to-tail manner, and the SMP-LTD domains of MMM1 and MDM12 generate a continuous hydrophobic tunnel for phospholipid trafficking.

It is found in the mitochondrion outer membrane. The protein resides in the endoplasmic reticulum membrane. Functionally, component of the ERMES/MDM complex, which serves as a molecular tether to connect the endoplasmic reticulum (ER) and mitochondria. Components of this complex are involved in the control of mitochondrial shape and protein biogenesis, and function in nonvesicular lipid trafficking between the ER and mitochondria. MDM12 is required for the interaction of the ER-resident membrane protein MMM1 and the outer mitochondrial membrane-resident beta-barrel protein MDM10. The MDM12-MMM1 subcomplex functions in the major beta-barrel assembly pathway that is responsible for biogenesis of all mitochondrial outer membrane beta-barrel proteins, and acts in a late step after the SAM complex. The MDM10-MDM12-MMM1 subcomplex further acts in the TOM40-specific pathway after the action of the MDM12-MMM1 complex. Essential for establishing and maintaining the structure of mitochondria and maintenance of mtDNA nucleoids. This chain is Mitochondrial distribution and morphology protein 12, found in Lodderomyces elongisporus (strain ATCC 11503 / CBS 2605 / JCM 1781 / NBRC 1676 / NRRL YB-4239) (Yeast).